Here is a 572-residue protein sequence, read N- to C-terminus: Phosphoenolpyruvate-protein phosphotransferase (572 aa).

His191 (tele-phosphohistidine intermediate) is an active-site residue. Phosphoenolpyruvate contacts are provided by Arg298 and Arg334. Mg(2+) is bound by residues Glu433 and Asp457. Phosphoenolpyruvate contacts are provided by residues 456–457 (ND) and Arg467. The active-site Proton donor is Cys504.

It belongs to the PEP-utilizing enzyme family. Homodimer. Mg(2+) is required as a cofactor.

Its subcellular location is the cytoplasm. It carries out the reaction L-histidyl-[protein] + phosphoenolpyruvate = N(pros)-phospho-L-histidyl-[protein] + pyruvate. In terms of biological role, general (non sugar-specific) component of the phosphoenolpyruvate-dependent sugar phosphotransferase system (sugar PTS). This major carbohydrate active-transport system catalyzes the phosphorylation of incoming sugar substrates concomitantly with their translocation across the cell membrane. Enzyme I transfers the phosphoryl group from phosphoenolpyruvate (PEP) to the phosphoryl carrier protein (HPr). In Staphylococcus aureus (strain COL), this protein is Phosphoenolpyruvate-protein phosphotransferase (ptsI).